The primary structure comprises 180 residues: Large ribosomal subunit protein uL5 (180 aa).

This sequence belongs to the universal ribosomal protein uL5 family. In terms of assembly, part of the 50S ribosomal subunit; part of the 5S rRNA/L5/L18/L25 subcomplex. Contacts the 5S rRNA and the P site tRNA. Forms a bridge to the 30S subunit in the 70S ribosome.

In terms of biological role, this is one of the proteins that bind and probably mediate the attachment of the 5S RNA into the large ribosomal subunit, where it forms part of the central protuberance. In the 70S ribosome it contacts protein S13 of the 30S subunit (bridge B1b), connecting the 2 subunits; this bridge is implicated in subunit movement. Contacts the P site tRNA; the 5S rRNA and some of its associated proteins might help stabilize positioning of ribosome-bound tRNAs. The chain is Large ribosomal subunit protein uL5 from Streptococcus thermophilus (strain ATCC BAA-491 / LMD-9).